The following is a 199-amino-acid chain: 3-isopropylmalate dehydratase small subunit (199 aa).

It belongs to the LeuD family. LeuD type 1 subfamily. In terms of assembly, heterodimer of LeuC and LeuD.

It catalyses the reaction (2R,3S)-3-isopropylmalate = (2S)-2-isopropylmalate. It functions in the pathway amino-acid biosynthesis; L-leucine biosynthesis; L-leucine from 3-methyl-2-oxobutanoate: step 2/4. Catalyzes the isomerization between 2-isopropylmalate and 3-isopropylmalate, via the formation of 2-isopropylmaleate. The polypeptide is 3-isopropylmalate dehydratase small subunit (Kocuria rhizophila (strain ATCC 9341 / DSM 348 / NBRC 103217 / DC2201)).